Here is a 455-residue protein sequence, read N- to C-terminus: Ectonucleoside triphosphate diphosphohydrolase 6 (455 aa).

Residues 1 to 12 are Cytoplasmic-facing; it reads MRKIPNHGTLRM. Residues 13-32 traverse the membrane as a helical segment; the sequence is TKVAYPLGLCVGLFIYVAYI. Over 33–455 the chain is Lumenal; sequence KWHRASAAQA…SLKRQKVPAL (423 aa). E196 (proton acceptor) is an active-site residue. Intrachain disulfides connect C297–C327 and C387–C401.

Belongs to the GDA1/CD39 NTPase family. It depends on Mg(2+) as a cofactor. Ca(2+) is required as a cofactor. In terms of processing, N-glycosylated.

Its subcellular location is the golgi apparatus membrane. It is found in the secreted. It localises to the cell membrane. It carries out the reaction a ribonucleoside 5'-diphosphate + H2O = a ribonucleoside 5'-phosphate + phosphate + H(+). It catalyses the reaction IDP + H2O = IMP + phosphate + H(+). The catalysed reaction is GDP + H2O = GMP + phosphate + H(+). The enzyme catalyses UDP + H2O = UMP + phosphate + H(+). In terms of biological role, catalyzes the hydrolysis of nucleoside triphosphates and diphosphates in a calcium- or magnesium-dependent manner. Has a strong preference for nucleoside diphosphates, preferentially hydrolyzes GDP, IDP, and UDP, with slower hydrolysis of CDP, ITP, GTP, CTP, ADP, and UTP and virtually no hydrolysis of ATP. The membrane bound form might support glycosylation reactions in the Golgi apparatus and, when released from cells, might catalyze the hydrolysis of extracellular nucleotides. The polypeptide is Ectonucleoside triphosphate diphosphohydrolase 6 (Mus musculus (Mouse)).